We begin with the raw amino-acid sequence, 427 residues long: Trigger factor (427 aa).

A PPIase FKBP-type domain is found at 163–248 (GDTVVIDFVG…VNEVKAKEVP (86 aa)).

Belongs to the FKBP-type PPIase family. Tig subfamily.

It localises to the cytoplasm. It carries out the reaction [protein]-peptidylproline (omega=180) = [protein]-peptidylproline (omega=0). Its function is as follows. Involved in protein export. Acts as a chaperone by maintaining the newly synthesized protein in an open conformation. Functions as a peptidyl-prolyl cis-trans isomerase. The sequence is that of Trigger factor from Streptococcus thermophilus (strain CNRZ 1066).